We begin with the raw amino-acid sequence, 400 residues long: Tryptophan synthase beta chain (400 aa).

Position 92 is an N6-(pyridoxal phosphate)lysine (lysine 92).

This sequence belongs to the TrpB family. As to quaternary structure, tetramer of two alpha and two beta chains. Requires pyridoxal 5'-phosphate as cofactor.

The enzyme catalyses (1S,2R)-1-C-(indol-3-yl)glycerol 3-phosphate + L-serine = D-glyceraldehyde 3-phosphate + L-tryptophan + H2O. It participates in amino-acid biosynthesis; L-tryptophan biosynthesis; L-tryptophan from chorismate: step 5/5. In terms of biological role, the beta subunit is responsible for the synthesis of L-tryptophan from indole and L-serine. This chain is Tryptophan synthase beta chain, found in Neisseria gonorrhoeae (strain NCCP11945).